The chain runs to 172 residues: Protein YdeJ (172 aa).

Belongs to the CinA family.

Does not have nicotinamide-nucleotide (NMN) amidohydrolase activity. This is Protein YdeJ (ydeJ) from Escherichia coli (strain K12).